Reading from the N-terminus, the 302-residue chain is Uroporphyrinogen-III synthase, chloroplastic (302 aa).

Positions 1 to 39 (MALSSSSHLLPFSRPPATFPRARHAGGGRGRAGATGRFI) are disordered. Residues 1–50 (MALSSSSHLLPFSRPPATFPRARHAGGGRGRAGATGRFIACSSPPPPDVV) constitute a chloroplast transit peptide.

It belongs to the uroporphyrinogen-III synthase family.

The protein resides in the plastid. Its subcellular location is the chloroplast. It catalyses the reaction hydroxymethylbilane = uroporphyrinogen III + H2O. The protein operates within porphyrin-containing compound metabolism; protoporphyrin-IX biosynthesis; coproporphyrinogen-III from 5-aminolevulinate: step 3/4. Catalyzes cyclization of the linear tetrapyrrole, hydroxymethylbilane, to the macrocyclic uroporphyrinogen III, a precursor of tetrapyrroles such as chlorophyll, heme and phycobilins. This is Uroporphyrinogen-III synthase, chloroplastic (UROS) from Oryza sativa subsp. japonica (Rice).